The primary structure comprises 1178 residues: DNA-directed RNA polymerase subunit beta' (1178 aa).

4 residues coordinate Zn(2+): cysteine 60, cysteine 62, cysteine 75, and cysteine 78. The Mg(2+) site is built by aspartate 450, aspartate 452, and aspartate 454. Zn(2+) contacts are provided by cysteine 795, cysteine 869, cysteine 876, and cysteine 879.

Belongs to the RNA polymerase beta' chain family. The RNAP catalytic core consists of 2 alpha, 1 beta, 1 beta' and 1 omega subunit. When a sigma factor is associated with the core the holoenzyme is formed, which can initiate transcription. The cofactor is Mg(2+). Requires Zn(2+) as cofactor.

It carries out the reaction RNA(n) + a ribonucleoside 5'-triphosphate = RNA(n+1) + diphosphate. In terms of biological role, DNA-dependent RNA polymerase catalyzes the transcription of DNA into RNA using the four ribonucleoside triphosphates as substrates. This Clostridium botulinum (strain Langeland / NCTC 10281 / Type F) protein is DNA-directed RNA polymerase subunit beta'.